A 125-amino-acid chain; its full sequence is MSGPQNPQAGPGGPPSGPPQPGGPPGPPQGPPQPVQQSKRLQQTQAQVEEVVDIMRVNVDKVLERDSKISELDDRADALQAGASQFEASAGKLKRKFWWKNCKMMIILGGIVAVIVTVIIVWAAT.

The disordered stretch occupies residues 1–46 (MSGPQNPQAGPGGPPSGPPQPGGPPGPPQGPPQPVQQSKRLQQTQA). Residues 1–103 (MSGPQNPQAG…KRKFWWKNCK (103 aa)) lie on the Cytoplasmic side of the membrane. Residues 12–34 (GGPPSGPPQPGGPPGPPQGPPQP) show a composition bias toward pro residues. Residues 40-100 (RLQQTQAQVE…GKLKRKFWWK (61 aa)) form the v-SNARE coiled-coil homology domain. Residues 104–123 (MMIILGGIVAVIVTVIIVWA) form a helical; Anchor for type IV membrane protein membrane-spanning segment. The Vesicular segment spans residues 124–125 (AT).

The protein belongs to the synaptobrevin family.

Its subcellular location is the cytoplasmic vesicle. The protein localises to the secretory vesicle. The protein resides in the synaptic vesicle membrane. It localises to the synapse. It is found in the synaptosome. Intrinsic membrane protein of small synaptic vesicles. This Doryteuthis pealeii (Longfin inshore squid) protein is Synaptobrevin.